Consider the following 873-residue polypeptide: Nitrate reductase [NADPH] (873 aa).

A disordered region spans residues 30–61 (TELDTADIPLPPPSKEPTEVLSLDKTTPDSHV). Mo-molybdopterin is bound at residue Cys150. The Cytochrome b5 heme-binding domain occupies 512 to 587 (TRIIDLEEFK…MPDYHIGTLD (76 aa)). His547 and His570 together coordinate heme. One can recognise an FAD-binding FR-type domain in the interval 616–729 (KAWTKATLTK…KGPTGRFEYL (114 aa)). Residues 672–675 (RSYT), 689–693 (LIKIY), 703–705 (KMT), and Thr756 contribute to the FAD site. 843 to 852 (MVLVCGPEAM) contributes to the NADP(+) binding site.

This sequence belongs to the nitrate reductase family. As to quaternary structure, homodimer. FAD serves as cofactor. It depends on heme as a cofactor. Mo-molybdopterin is required as a cofactor.

It catalyses the reaction nitrite + NADP(+) + H2O = nitrate + NADPH + H(+). Functionally, nitrate reductase is a key enzyme involved in the first step of nitrate assimilation in plants, fungi and bacteria. This is Nitrate reductase [NADPH] (niaD) from Emericella nidulans (strain FGSC A4 / ATCC 38163 / CBS 112.46 / NRRL 194 / M139) (Aspergillus nidulans).